A 237-amino-acid chain; its full sequence is tRNA (guanine-N(7)-)-methyltransferase (237 aa).

Residues Glu-67, Glu-92, Asp-119, and Asp-141 each coordinate S-adenosyl-L-methionine. Residue Asp-141 is part of the active site. Substrate-binding positions include Lys-145, Asp-177, and 214 to 217 (TRYE).

The protein belongs to the class I-like SAM-binding methyltransferase superfamily. TrmB family.

It catalyses the reaction guanosine(46) in tRNA + S-adenosyl-L-methionine = N(7)-methylguanosine(46) in tRNA + S-adenosyl-L-homocysteine. The protein operates within tRNA modification; N(7)-methylguanine-tRNA biosynthesis. Catalyzes the formation of N(7)-methylguanine at position 46 (m7G46) in tRNA. The sequence is that of tRNA (guanine-N(7)-)-methyltransferase from Jannaschia sp. (strain CCS1).